A 126-amino-acid polypeptide reads, in one-letter code: Histone H2B-alpha (126 aa).

The disordered stretch occupies residues 1 to 34; that stretch reads MSAAEKKPASKAPAGKAPRDTMKSADKKRGKNRK. N6-acetyllysine; alternate is present on residues lysine 6 and lysine 7. Glycyl lysine isopeptide (Lys-Gly) (interchain with G-Cter in SUMO); alternate cross-links involve residues lysine 6 and lysine 7. Serine 10 carries the post-translational modification Phosphoserine. Lysine 11 carries the post-translational modification N6-acetyllysine. Residues 17–27 are compositionally biased toward basic and acidic residues; sequence APRDTMKSADK. A Glycyl lysine isopeptide (Lys-Gly) (interchain with G-Cter in ubiquitin) cross-link involves residue lysine 120.

It belongs to the histone H2B family. The nucleosome is a histone octamer containing two molecules each of H2A, H2B, H3 and H4 assembled in one H3-H4 heterotetramer and two H2A-H2B heterodimers. The octamer wraps approximately 147 bp of DNA. Interacts with rik1. In terms of processing, monoubiquitinated by the rhp6/ubc2-bre1 complex to form H2BK123ub1. H2BK123ub1 gives a specific tag for epigenetic transcriptional activation and is also prerequisite for H3K4me and H3K79me formation. H2BK123ub1 also modulates the formation of double-strand breaks during meiosis and is a prerequisite for DNA-damage checkpoint activation. Phosphorylated by shk1 to form H2BS10ph during progression through meiotic prophase. May be correlated with chromosome condensation. Post-translationally, acetylation of N-terminal lysines and particularly formation of H2BK11ac has a positive effect on transcription. In terms of processing, sumoylation to form H2BK6su or H2BK7su occurs preferentially near the telomeres and represses gene transcription.

Its subcellular location is the nucleus. It localises to the chromosome. Core component of nucleosome. Nucleosomes wrap and compact DNA into chromatin, limiting DNA accessibility to the cellular machineries which require DNA as a template. Histones thereby play a central role in transcription regulation, DNA repair, DNA replication and chromosomal stability. DNA accessibility is regulated via a complex set of post-translational modifications of histones, also called histone code, and nucleosome remodeling. This is Histone H2B-alpha (htb1) from Schizosaccharomyces pombe (strain 972 / ATCC 24843) (Fission yeast).